The sequence spans 774 residues: Transmembrane GTPase fzo-1 (774 aa).

The interval 1–29 (MSGTASLVHTLPASGDSNHRGLHSLKNSR) is disordered. The Cytoplasmic portion of the chain corresponds to 1-617 (MSGTASLVHT…EEQAMMTQMV (617 aa)). Basic residues predominate over residues 20–29 (RGLHSLKNSR). Positions 51–71 (YGELKDNVAELEGVYKDIKEN) form a coiled coil. The 256-residue stretch at 97–352 (QRDNMKVVFF…TRALEFQNFE (256 aa)) folds into the Dynamin-type G domain. The interval 107 to 114 (GRTSNGKS) is G1 motif. Residue 110-115 (SNGKST) coordinates GTP. Positions 133-134 (TT) are G2 motif. The tract at residues 211 to 214 (DSPG) is G3 motif. 270-273 (NRWD) serves as a coordination point for GTP. The interval 270-273 (NRWD) is G4 motif. A region of interest (G5 motif) is located at residue Glu300. Ser317 provides a ligand contact to GTP. Residues 385-415 (NLNSVLTSAAEQRSKLQNNLNESTRTFNECR) adopt a coiled-coil conformation. Residues 618 to 638 (LTSAAFLANGSLGVLVVGGIV) traverse the membrane as a helical segment. Residues 639–640 (YK) are Mitochondrial intermembrane-facing. The chain crosses the membrane as a helical span at residues 641–661 (AVGWRVIAVGGAAYAGLYAWE). The Cytoplasmic segment spans residues 662–774 (RMRWNSGAKE…YLRSDSPPTP (113 aa)).

The protein belongs to the TRAFAC class dynamin-like GTPase superfamily. Dynamin/Fzo/YdjA family. Mitofusin subfamily. As to quaternary structure, interacts with ced-9; interaction may be suppressed by interaction of ced-9 with egl-1.

The protein resides in the mitochondrion outer membrane. It catalyses the reaction GTP + H2O = GDP + phosphate + H(+). Its function is as follows. Probable transmembrane GTPase. Mediates mitochondrial fusion. Fusion of mitochondria occurs in many cell types and constitutes an important step in mitochondria morphology, which is balanced between fusion and fission. Dispensable for normal apoptotic processes during embryonic development. The sequence is that of Transmembrane GTPase fzo-1 from Caenorhabditis elegans.